The sequence spans 469 residues: Serine/threonine-protein kinase orb6 (469 aa).

The Protein kinase domain maps to 93–392 (FSTIKVIGKG…AIEIMQHPFF (300 aa)). ATP contacts are provided by residues 99 to 107 (IGKGAFGEV) and Lys122. The Proton acceptor role is filled by Asp216. One can recognise an AGC-kinase C-terminal domain in the interval 393–467 (TGIDWDHIRE…KKFNYLTMKG (75 aa)).

The protein belongs to the protein kinase superfamily. Ser/Thr protein kinase family. Interacts with mob2.

It carries out the reaction L-seryl-[protein] + ATP = O-phospho-L-seryl-[protein] + ADP + H(+). The catalysed reaction is L-threonyl-[protein] + ATP = O-phospho-L-threonyl-[protein] + ADP + H(+). Its function is as follows. Interacts with pak1/shk1 and coordinates cell morphogenesis with the cell cycle. It is essential for maintenance of cell polarity and is involved in mitotic control. The chain is Serine/threonine-protein kinase orb6 (orb6) from Schizosaccharomyces pombe (strain 972 / ATCC 24843) (Fission yeast).